Reading from the N-terminus, the 947-residue chain is ATP-dependent RNA helicase DDX42 (947 aa).

Gly residues predominate over residues 1-18; the sequence is MNWNKGGSGNKRGFGFGG. 3 disordered regions span residues 1–54, 68–114, and 176–200; these read MNWN…NQLP, EENS…PLEA, and NLEYDSDGNPIAPTTKRIIDPLPPI. Over residues 34–54 the composition is skewed to polar residues; it reads VSHSAFQSASSKYGSTSNQLP. Positions 68-81 are enriched in acidic residues; that stretch reads EENSYFDDEEEDSS. Positions 112-152 form a coiled coil; that stretch reads LEAFMAEVEDQAAKDMRKLEERDKEKANARGIRDDIEEEDD. Positions 250-278 match the Q motif motif; the sequence is SSFAHFGFDEQLLHQIRKSEYTQPTPIQC. Positions 281 to 456 constitute a Helicase ATP-binding domain; the sequence is IPVALSGRDM…RDILVDPIRV (176 aa). 294–301 contacts ATP; it reads AKTGSGKT. The DEAD box signature appears at 404–407; it reads DEAD. A Helicase C-terminal domain is found at 484–629; that stretch reads WLTRRLVEFT…YVSKELLDLA (146 aa). 2 disordered regions span residues 731-754 and 797-947; these read SAGSLSSVPSAHPPSGKLPAEAAP and GASA…RWDS. Basic and acidic residues predominate over residues 805 to 929; sequence GGRERHSDSK…RKEGTREAKT (125 aa). A compositionally biased stretch (basic residues) spans 938–947; it reads PKRKKSRWDS.

Belongs to the DEAD box helicase family. DDX42 subfamily. As to quaternary structure, transient component of the SF3B subcomplex of the 17S U2 SnRNP complex.

It is found in the cytoplasm. The protein localises to the nucleus. The enzyme catalyses ATP + H2O = ADP + phosphate + H(+). In terms of biological role, ATP-dependent RNA helicase that binds to partially double-stranded RNAs (dsRNAs) in order to unwind RNA secondary structures. Unwinding is promoted in the presence of single-strand binding proteins. Also mediates RNA duplex formation thereby displacing the single-strand RNA binding protein. ATP and ADP modulate its activity: ATP binding and hydrolysis by DDX42 triggers RNA strand separation, whereas the ADP-bound form of the protein triggers annealing of complementary RNA strands. Required for assembly of the 17S U2 SnRNP complex of the spliceosome, a large ribonucleoprotein complex that removes introns from transcribed pre-mRNAs: DDX42 associates transiently with the SF3B subcomplex of the 17S U2 SnRNP complex and is released after fulfilling its role in the assembly of 17S U2 SnRNP. The sequence is that of ATP-dependent RNA helicase DDX42 (ddx42) from Xenopus laevis (African clawed frog).